The sequence spans 343 residues: Mitochondrial import inner membrane translocase subunit TIM50-A (343 aa).

The Mitochondrial matrix portion of the chain corresponds to 1–57 (MHKIVWFGTLNKSIGYIGKKKTCLLSPCEKICLNSARKTVQRCDKNYSPPKLRRIKN). A helical transmembrane segment spans residues 58 to 77 (FYTYSVVLGSLFSIVMWAIY). Topologically, residues 78-343 (KLGKPEEDHR…GRSLRGSSIK (266 aa)) are mitochondrial intermembrane. The region spanning 135-278 (YIQPPYSLVL…FDLTAFLQLI (144 aa)) is the FCP1 homology domain.

It belongs to the TIM50 family. As to quaternary structure, component of the TIM23 complex at least composed of Tim23, Tim17 (Tim17a1, Tim17a2 or Tim17b1) and a Tim50. Exclusively expressed in the testis.

It is found in the mitochondrion inner membrane. Its function is as follows. Essential component of the TIM23 complex, a complex that mediates the translocation of transit peptide-containing proteins across the mitochondrial inner membrane. This Drosophila melanogaster (Fruit fly) protein is Mitochondrial import inner membrane translocase subunit TIM50-A (ttm3).